Reading from the N-terminus, the 118-residue chain is NADH-ubiquinone oxidoreductase chain 3 (118 aa).

Helical transmembrane passes span 1-21 (MLFF…VLVF), 59-79 (YTYF…SLLL), and 86-106 (VLYK…IGFL).

This sequence belongs to the complex I subunit 3 family.

The protein resides in the mitochondrion membrane. The enzyme catalyses a ubiquinone + NADH + 5 H(+)(in) = a ubiquinol + NAD(+) + 4 H(+)(out). Functionally, core subunit of the mitochondrial membrane respiratory chain NADH dehydrogenase (Complex I) that is believed to belong to the minimal assembly required for catalysis. Complex I functions in the transfer of electrons from NADH to the respiratory chain. The immediate electron acceptor for the enzyme is believed to be ubiquinone. In Fasciola hepatica (Liver fluke), this protein is NADH-ubiquinone oxidoreductase chain 3 (ND3).